We begin with the raw amino-acid sequence, 278 residues long: Phosphatidylglycerol--prolipoprotein diacylglyceryl transferase (278 aa).

4 helical membrane passes run 19–39 (WYGI…INEG), 49–69 (FIDF…IYYV), 86–106 (IWNG…VLLI), and 112–132 (MLPP…AQVI). Position 134 (Arg134) interacts with a 1,2-diacyl-sn-glycero-3-phospho-(1'-sn-glycerol). Transmembrane regions (helical) follow at residues 174–194 (QPTY…ILSL), 204–224 (GEIF…VEGM), and 235–255 (IRVS…LWIY).

Belongs to the Lgt family.

The protein localises to the cell membrane. The catalysed reaction is L-cysteinyl-[prolipoprotein] + a 1,2-diacyl-sn-glycero-3-phospho-(1'-sn-glycerol) = an S-1,2-diacyl-sn-glyceryl-L-cysteinyl-[prolipoprotein] + sn-glycerol 1-phosphate + H(+). The protein operates within protein modification; lipoprotein biosynthesis (diacylglyceryl transfer). In terms of biological role, catalyzes the transfer of the diacylglyceryl group from phosphatidylglycerol to the sulfhydryl group of the N-terminal cysteine of a prolipoprotein, the first step in the formation of mature lipoproteins. The sequence is that of Phosphatidylglycerol--prolipoprotein diacylglyceryl transferase from Lactobacillus johnsonii (strain CNCM I-12250 / La1 / NCC 533).